Here is a 212-residue protein sequence, read N- to C-terminus: Deoxyribose-phosphate aldolase (212 aa).

The active-site Proton donor/acceptor is D89. K151 (schiff-base intermediate with acetaldehyde) is an active-site residue. Catalysis depends on K180, which acts as the Proton donor/acceptor.

This sequence belongs to the DeoC/FbaB aldolase family. DeoC type 1 subfamily.

It is found in the cytoplasm. The catalysed reaction is 2-deoxy-D-ribose 5-phosphate = D-glyceraldehyde 3-phosphate + acetaldehyde. The protein operates within carbohydrate degradation; 2-deoxy-D-ribose 1-phosphate degradation; D-glyceraldehyde 3-phosphate and acetaldehyde from 2-deoxy-alpha-D-ribose 1-phosphate: step 2/2. Catalyzes a reversible aldol reaction between acetaldehyde and D-glyceraldehyde 3-phosphate to generate 2-deoxy-D-ribose 5-phosphate. The polypeptide is Deoxyribose-phosphate aldolase (Clostridium botulinum (strain 657 / Type Ba4)).